Here is a 427-residue protein sequence, read N- to C-terminus: Glutamate-1-semialdehyde 2,1-aminomutase 1 (427 aa).

An N6-(pyridoxal phosphate)lysine modification is found at K267.

It belongs to the class-III pyridoxal-phosphate-dependent aminotransferase family. HemL subfamily. In terms of assembly, homodimer. Pyridoxal 5'-phosphate serves as cofactor.

The protein localises to the cytoplasm. It carries out the reaction (S)-4-amino-5-oxopentanoate = 5-aminolevulinate. Its pathway is porphyrin-containing compound metabolism; protoporphyrin-IX biosynthesis; 5-aminolevulinate from L-glutamyl-tRNA(Glu): step 2/2. This chain is Glutamate-1-semialdehyde 2,1-aminomutase 1, found in Staphylococcus epidermidis (strain ATCC 35984 / DSM 28319 / BCRC 17069 / CCUG 31568 / BM 3577 / RP62A).